The primary structure comprises 106 residues: ATP synthase-coupling factor 6, mitochondrial (106 aa).

It belongs to the eukaryotic ATPase subunit F6 family. As to quaternary structure, F-type ATPases have 2 components, CF(1) - the catalytic core - and CF(0) - the membrane proton channel. CF(0) seems to have nine subunits: a, b, c, d, e, f, g, F6 and 8 (or A6L).

It is found in the mitochondrion. The protein resides in the mitochondrion inner membrane. In terms of biological role, mitochondrial membrane ATP synthase (F(1)F(0) ATP synthase or Complex V) produces ATP from ADP in the presence of a proton gradient across the membrane which is generated by electron transport complexes of the respiratory chain. F-type ATPases consist of two structural domains, F(1) - containing the extramembraneous catalytic core and F(0) - containing the membrane proton channel, linked together by a central stalk and a peripheral stalk. During catalysis, ATP synthesis in the catalytic domain of F(1) is coupled via a rotary mechanism of the central stalk subunits to proton translocation. Part of the complex F(0) domain and the peripheric stalk, which acts as a stator to hold the catalytic alpha(3)beta(3) subcomplex and subunit a/ATP6 static relative to the rotary elements. This is ATP synthase-coupling factor 6, mitochondrial from Drosophila melanogaster (Fruit fly).